A 533-amino-acid chain; its full sequence is Beta-1,4 N-acetylgalactosaminyltransferase 1 (533 aa).

The Cytoplasmic portion of the chain corresponds to 1 to 7; that stretch reads MRLDRRA. Residues 8 to 25 form a helical; Signal-anchor for type II membrane protein membrane-spanning segment; that stretch reads LYALVLLLACASLGLLYS. The Lumenal segment spans residues 26 to 533; it reads STRNAPSLPN…KHRLQCMTAE (508 aa). N-linked (GlcNAc...) asparagine glycans are attached at residues Asn79, Asn179, and Asn274. The cysteines at positions 429 and 476 are disulfide-linked.

It belongs to the glycosyltransferase 2 family. In terms of assembly, homodimer; disulfide-linked. In terms of tissue distribution, most abundant in brain, liver, lung, spleen and testis.

It is found in the golgi apparatus membrane. The enzyme catalyses a ganglioside GM3 (d18:1(4E)) + UDP-N-acetyl-alpha-D-galactosamine = a ganglioside GM2 (d18:1(4E)) + UDP + H(+). The catalysed reaction is a ganglioside GD3 (d18:1(4E)) + UDP-N-acetyl-alpha-D-galactosamine = a ganglioside GD2 (d18:1(4E)) + UDP + H(+). It carries out the reaction a ganglioside GM3 + UDP-N-acetyl-alpha-D-galactosamine = a ganglioside GM2 + UDP + H(+). It catalyses the reaction a ganglioside GD3 + UDP-N-acetyl-alpha-D-galactosamine = a ganglioside GD2 + UDP + H(+). The enzyme catalyses a ganglioside GD1a + UDP-N-acetyl-alpha-D-galactosamine = a ganglioside GalNAc-GD1a + UDP + H(+). The catalysed reaction is a ganglioside GT3 (d18:1(4E)) + UDP-N-acetyl-alpha-D-galactosamine = a ganglioside GT2 (d18:1(4E)) + UDP + H(+). It carries out the reaction a beta-D-Gal-(1-&gt;4)-beta-D-Glc-(1&lt;-&gt;1)-Cer(d18:1(4E)) + UDP-N-acetyl-alpha-D-galactosamine = a ganglioside GA2 (d18:1(4E)) + UDP + H(+). It catalyses the reaction a neolactoside IV(3)-alpha-NeuGc-nLc4Cer + UDP-N-acetyl-alpha-D-galactosamine = a neolactoside IV(4)-beta-GalNAc-IV(3)-alpha-NeuGc-nLc4Cer + UDP + H(+). The protein operates within sphingolipid metabolism. In terms of biological role, involved in the biosynthesis of gangliosides GM2, GD2 and GA2. Involved in the biosynthesis of gangliosides GM2, GD2, GT2 and GA2 from GM3, GD3, GT3 and GA3, respectively. The sequence is that of Beta-1,4 N-acetylgalactosaminyltransferase 1 from Mus musculus (Mouse).